A 229-amino-acid polypeptide reads, in one-letter code: Large ribosomal subunit protein uL1 (229 aa).

This sequence belongs to the universal ribosomal protein uL1 family. As to quaternary structure, part of the 50S ribosomal subunit.

Functionally, binds directly to 23S rRNA. The L1 stalk is quite mobile in the ribosome, and is involved in E site tRNA release. Its function is as follows. Protein L1 is also a translational repressor protein, it controls the translation of the L11 operon by binding to its mRNA. The protein is Large ribosomal subunit protein uL1 of Caulobacter vibrioides (strain ATCC 19089 / CIP 103742 / CB 15) (Caulobacter crescentus).